Consider the following 123-residue polypeptide: UPF0738 protein Bcer98_0913 (123 aa).

This sequence belongs to the UPF0738 family.

The sequence is that of UPF0738 protein Bcer98_0913 from Bacillus cytotoxicus (strain DSM 22905 / CIP 110041 / 391-98 / NVH 391-98).